The chain runs to 125 residues: Plastocyanin (125 aa).

An N-terminal signal peptide occupies residues 1 to 34; it reads MKVLASFARRLSLFAVAAVLCVGSFFLSAAPASA. In terms of domain architecture, Plastocyanin-like spans 35-125; sequence QTVAIKMGAD…AGMVGKIVVQ (91 aa). Residues His73, Cys110, His113, and Met118 each coordinate Cu cation.

It belongs to the plastocyanin family. Cu(2+) serves as cofactor.

Its subcellular location is the cellular thylakoid membrane. Functionally, participates in electron transfer between P700 and the cytochrome b6-f complex in photosystem I. This is Plastocyanin (petE) from Synechococcus elongatus (strain ATCC 33912 / PCC 7942 / FACHB-805) (Anacystis nidulans R2).